Reading from the N-terminus, the 307-residue chain is 1-phosphofructokinase (307 aa).

ATP-binding positions include 217-222 (SMGSDG) and 249-250 (GD). Catalysis depends on Asp250, which acts as the Proton acceptor.

This sequence belongs to the carbohydrate kinase PfkB family.

It catalyses the reaction beta-D-fructose 1-phosphate + ATP = beta-D-fructose 1,6-bisphosphate + ADP + H(+). Its function is as follows. Catalyzes the ATP-dependent phosphorylation of fructose-l-phosphate to fructose-l,6-bisphosphate. The polypeptide is 1-phosphofructokinase (fruK) (Borreliella burgdorferi (strain ATCC 35210 / DSM 4680 / CIP 102532 / B31) (Borrelia burgdorferi)).